The sequence spans 222 residues: Peptidyl-prolyl cis-trans isomerase FKBP7 (222 aa).

The N-terminal stretch at 1–23 (MPKTMHFLFRFIVFFYLWGLFTA) is a signal peptide. Residue Asn-45 is glycosylated (N-linked (GlcNAc...) asparagine). A PPIase FKBP-type domain is found at 53–145 (GDLLNAHYDG…IFEIELYAVT (93 aa)). EF-hand domains lie at 145–180 (TKGP…EFEK) and 189–222 (YQDA…HDEL). Residues Asp-158, Asp-160, Asp-162, Gln-164, Glu-169, Asp-202, Asp-204, Asp-206, and Glu-213 each contribute to the Ca(2+) site. Residues 200–222 (KNDHDGDGFISPKEYNVYQHDEL) are disordered. The Retention in the endoplasmic reticulum signature appears at 219-222 (HDEL).

In terms of processing, glycosylated.

The protein resides in the endoplasmic reticulum lumen. It carries out the reaction [protein]-peptidylproline (omega=180) = [protein]-peptidylproline (omega=0). In terms of biological role, PPIases accelerate the folding of proteins during protein synthesis. The protein is Peptidyl-prolyl cis-trans isomerase FKBP7 (FKBP7) of Homo sapiens (Human).